Consider the following 282-residue polypeptide: D-alanine aminotransferase (282 aa).

Substrate is bound at residue Tyr32. Arg51 lines the pyridoxal 5'-phosphate pocket. Substrate-binding residues include Arg99 and His101. Catalysis depends on Lys146, which acts as the Proton acceptor. N6-(pyridoxal phosphate)lysine is present on Lys146. Glu178 is a pyridoxal 5'-phosphate binding site.

This sequence belongs to the class-IV pyridoxal-phosphate-dependent aminotransferase family. As to quaternary structure, homodimer. It depends on pyridoxal 5'-phosphate as a cofactor.

The catalysed reaction is D-alanine + 2-oxoglutarate = D-glutamate + pyruvate. Functionally, acts on the D-isomers of alanine, leucine, aspartate, glutamate, aminobutyrate, norvaline and asparagine. The enzyme transfers an amino group from a substrate D-amino acid to the pyridoxal phosphate cofactor to form pyridoxamine and an alpha-keto acid in the first half-reaction. The second half-reaction is the reverse of the first, transferring the amino group from the pyridoxamine to a second alpha-keto acid to form the product D-amino acid via a ping-pong mechanism. This is an important process in the formation of D-alanine and D-glutamate, which are essential bacterial cell wall components. The sequence is that of D-alanine aminotransferase (dat) from Staphylococcus aureus (strain COL).